A 295-amino-acid polypeptide reads, in one-letter code: Manganese transport system membrane protein MntD (295 aa).

A run of 9 helical transmembrane segments spans residues 7-27 (IIAT…FLVL), 42-62 (LLGI…YMFI), 63-83 (GAAA…SKGV), 87-107 (AAIG…LSVY), 138-158 (IGPK…VLIS), 174-194 (ALAL…MLSL), 203-223 (VGAV…HLLT), 227-247 (LYML…GYFF), and 253-273 (VSIS…AFLF).

The protein belongs to the ABC-3 integral membrane protein family. As to quaternary structure, the complex is probably composed of two ATP-binding proteins (MntB), two transmembrane proteins (MntC and MntD) and a solute-binding protein (MntA).

It localises to the cell membrane. Functionally, probably part of the ABC transporter complex MntABCD involved in manganese import. Probably responsible for the translocation of the substrate across the membrane. The protein is Manganese transport system membrane protein MntD of Bacillus subtilis (strain 168).